The primary structure comprises 233 residues: 3,4-dihydroxy-2-butanone 4-phosphate synthase (233 aa).

E37 is a Mg(2+) binding site. E37 contributes to the Mn(2+) binding site. D41 contributes to the D-ribulose 5-phosphate binding site. S-glutathionyl cysteine is present on C66. Residues T92 and 150–154 (RRGHT) each bind D-ribulose 5-phosphate. H153 contacts Mg(2+). H153 lines the Mn(2+) pocket.

As to quaternary structure, homodimer. Requires Mg(2+) as cofactor. The cofactor is Mn(2+). Post-translationally, S-glutathionylation is reversible and dependent on a glutaredoxin.

The catalysed reaction is D-ribulose 5-phosphate = (2S)-2-hydroxy-3-oxobutyl phosphate + formate + H(+). Its pathway is cofactor biosynthesis; riboflavin biosynthesis; 2-hydroxy-3-oxobutyl phosphate from D-ribulose 5-phosphate: step 1/1. In terms of biological role, catalyzes the conversion of D-ribulose 5-phosphate to formate and 3,4-dihydroxy-2-butanone 4-phosphate. This is 3,4-dihydroxy-2-butanone 4-phosphate synthase (RIB3) from Pyricularia oryzae (strain 70-15 / ATCC MYA-4617 / FGSC 8958) (Rice blast fungus).